Here is a 585-residue protein sequence, read N- to C-terminus: MENDKASHASPSIGVNEFVVQGEISIDDSERSVKSVSVSISDDEDSKTDVQDNMATPSTRSKFQTDLAIDNRLLEKDPKYKKLFTEKRRRRRPESCINLMTKGKGTGQKDNINDQIFSLRILPGSDLNSLKDSLWIIKISTQPDVEKTIARAFSDFYWLYHQLQNNHWGKTIPPPTRSNILVEKDEFAINHLFMIRNNEKYDPIFNFKPEYIISLQLMAMIKHIFNDKVLRLDSNFIDFISWDDDLPESLQIVVDDSTFTGDKILMTSSQFRELKEFHKQSKKVESITNSHASLIPVTELTEIYISPTKLFSRKDYQRLFQPQSTDNTFNNNDPLIQEWIPKSKTLFTSLSFGSSAPTYQEASTEIQACHDWVSISKEQWKQLLYHVLQYIVDEAVKVNSVINEFTECLKQISLDEVIRANSELFLKFSKLNESFLKKFKGASRQDILKLIILFDENVRFCESFESILNQRLKLGKILSIIEVDLDKKKNFLDKLSPGNNNSNNEDLKIRTAEDEYRIVLKRYNRVKQSWEKIMEDILNERKEFEKREAAEVNSCLKSIRDLNMDEKKHYLQLWQDFVPDEHISQ.

Residues 27-59 are disordered; that stretch reads DDSERSVKSVSVSISDDEDSKTDVQDNMATPST.

This is an uncharacterized protein from Saccharomyces cerevisiae (strain ATCC 204508 / S288c) (Baker's yeast).